A 565-amino-acid polypeptide reads, in one-letter code: NAD-dependent malic enzyme (565 aa).

Tyr103 functions as the Proton donor in the catalytic mechanism. Catalysis depends on Lys177, which acts as the Proton acceptor. Residues Glu248, Asp249, and Asp272 each coordinate a divalent metal cation. Residues Asp272 and Asn419 each contribute to the NAD(+) site. A Phosphoserine modification is found at Ser445.

The protein belongs to the malic enzymes family. The cofactor is Mg(2+). It depends on Mn(2+) as a cofactor.

The enzyme catalyses (S)-malate + NAD(+) = pyruvate + CO2 + NADH. It catalyses the reaction oxaloacetate + H(+) = pyruvate + CO2. The sequence is that of NAD-dependent malic enzyme (mae2) from Schizosaccharomyces pombe (strain 972 / ATCC 24843) (Fission yeast).